The sequence spans 283 residues: Thymidylate synthase (283 aa).

R22 contacts dUMP. The active-site Nucleophile is the C160. Residues 180–183 (RSCD), N191, and 221–223 (HIY) each bind dUMP. Position 183 (D183) interacts with (6R)-5,10-methylene-5,6,7,8-tetrahydrofolate. S282 lines the (6R)-5,10-methylene-5,6,7,8-tetrahydrofolate pocket.

The protein belongs to the thymidylate synthase family. Bacterial-type ThyA subfamily. As to quaternary structure, homodimer.

Its subcellular location is the cytoplasm. It catalyses the reaction dUMP + (6R)-5,10-methylene-5,6,7,8-tetrahydrofolate = 7,8-dihydrofolate + dTMP. It participates in pyrimidine metabolism; dTTP biosynthesis. Its function is as follows. Catalyzes the reductive methylation of 2'-deoxyuridine-5'-monophosphate (dUMP) to 2'-deoxythymidine-5'-monophosphate (dTMP) while utilizing 5,10-methylenetetrahydrofolate (mTHF) as the methyl donor and reductant in the reaction, yielding dihydrofolate (DHF) as a by-product. This enzymatic reaction provides an intracellular de novo source of dTMP, an essential precursor for DNA biosynthesis. The sequence is that of Thymidylate synthase from Haemophilus influenzae (strain PittGG).